The following is a 317-amino-acid chain: Protein-methionine-sulfoxide reductase catalytic subunit MsrP (317 aa).

The tat-type signal signal peptide spans 1–40 (MKKLTSNDVTPEEIFYQRRKIIKAFGLSAVATALPTFSFA). Mo-molybdopterin contacts are provided by residues N71, 74 to 75 (YE), C129, T164, N216, R221, and 232 to 234 (SIK).

Belongs to the MsrP family. In terms of assembly, heterodimer of a catalytic subunit (MsrP) and a heme-binding subunit (MsrQ). Requires Mo-molybdopterin as cofactor. Post-translationally, predicted to be exported by the Tat system. The position of the signal peptide cleavage has not been experimentally proven.

The protein localises to the periplasm. It catalyses the reaction L-methionyl-[protein] + a quinone + H2O = L-methionyl-(S)-S-oxide-[protein] + a quinol. The enzyme catalyses L-methionyl-[protein] + a quinone + H2O = L-methionyl-(R)-S-oxide-[protein] + a quinol. Its function is as follows. Part of the MsrPQ system that repairs oxidized periplasmic proteins containing methionine sulfoxide residues (Met-O), using respiratory chain electrons. Thus protects these proteins from oxidative-stress damage caused by reactive species of oxygen and chlorine generated by the host defense mechanisms. MsrPQ is essential for the maintenance of envelope integrity under bleach stress, rescuing a wide series of structurally unrelated periplasmic proteins from methionine oxidation. The catalytic subunit MsrP is non-stereospecific, being able to reduce both (R-) and (S-) diastereoisomers of methionine sulfoxide. This Histophilus somni (strain 2336) (Haemophilus somnus) protein is Protein-methionine-sulfoxide reductase catalytic subunit MsrP.